We begin with the raw amino-acid sequence, 459 residues long: Exodeoxyribonuclease 7 large subunit (459 aa).

The protein belongs to the XseA family. In terms of assembly, heterooligomer composed of large and small subunits.

It localises to the cytoplasm. The enzyme catalyses Exonucleolytic cleavage in either 5'- to 3'- or 3'- to 5'-direction to yield nucleoside 5'-phosphates.. Bidirectionally degrades single-stranded DNA into large acid-insoluble oligonucleotides, which are then degraded further into small acid-soluble oligonucleotides. This is Exodeoxyribonuclease 7 large subunit from Pseudomonas aeruginosa (strain UCBPP-PA14).